A 91-amino-acid chain; its full sequence is DNA-binding protein HU (91 aa).

It belongs to the bacterial histone-like protein family.

Histone-like DNA-binding protein which is capable of wrapping DNA to stabilize it, and thus to prevent its denaturation under extreme environmental conditions. Also seems to act as a fortuitous virulence factor in delayed sequelae by binding to heparan sulfate-proteoglycans in the extracellular matrix of target organs and acting as a nidus for in situ immune complex formation. The polypeptide is DNA-binding protein HU (hup) (Streptococcus downei (Streptococcus sobrinus)).